We begin with the raw amino-acid sequence, 458 residues long: Protein RICE SALT SENSITIVE 3 (458 aa).

The span at 1-17 (MVGSGAAGGGGGGGGGG) shows a compositional bias: gly residues. Disordered regions lie at residues 1 to 21 (MVGS…DHAR), 220 to 325 (TSPS…PEGD), 354 to 374 (GGGA…GHGG), and 386 to 458 (SHSN…TFLE). Residues 220–232 (TSPSPSSFPLKQQ) show a composition bias toward low complexity. Pro residues predominate over residues 245 to 262 (HAPPQLPPGASPLFPPGP). Over residues 308-317 (QQPMAAPQQH) the composition is skewed to low complexity. Over residues 413–436 (SSSTTSTSPSVSASTAPAPPQQQQ) the composition is skewed to low complexity.

Interacts with BHLH094, BHLH089, TIFY11A/JAZ9 and TIFY11C/JAZ11. Forms a ternary complex with TIFY11A/JAZ9 and BHLH094 in the nucleus. Expressed in root tips. Expressed at high levels in the meristematic zone and at low levels in the elongation zone of the root tip.

It localises to the nucleus. The protein localises to the cytoplasm. Involved in the repression of jasmonate (JA)-induced genes. Forms a ternary complex with TIFY11A/JAZ9 and BHLH094 to negatively regulate JA-responsive genes. Involved in transcriptional regulation in the root tip. Plays a regulatory role in root cell elongation. Regulates root cell elongation during salt stress. This is Protein RICE SALT SENSITIVE 3 from Oryza sativa subsp. japonica (Rice).